The following is a 502-amino-acid chain: Alpha-globin transcription factor CP2 (502 aa).

One can recognise a Grh/CP2 DB domain in the interval 61-300; sequence ENKILPFQYV…SPGFNSSHSS (240 aa). The tract at residues 133–395 is DNA-binding; sequence EHQQLEGWRW…VRPRLTIYVC (263 aa). Disordered regions lie at residues 238-268 and 294-325; these read FKPKGADRKQKTDREKMEKRTPHEKEKYQPS and FNSSHSSFSLGEGNGSPNHQPEPPPPVTDNLL. Residues 241–265 show a composition bias toward basic and acidic residues; sequence KGADRKQKTDREKMEKRTPHEKEKY. Ser-353 is modified (phosphoserine).

Belongs to the grh/CP2 family. CP2 subfamily. As to quaternary structure, binds to DNA as a dimer, isoform 3 does not bind to DNA or affect the binding of isoform 1 to DNA. Interacts with UBP1 and PIAS1, and is probably part of a complex containing TFCP2, UBP1 and PIAS1. Component of the SSP (stage selector protein) complex, which appears to be a heteromer of TFCP2 and 2 copies of NFE4. In terms of tissue distribution, ubiquitous. Expressed in brain, ovary, kidney, thymus, spleen, liver, adrenal, heart and lung (at protein level).

The protein resides in the nucleus. Its function is as follows. Binds a variety of cellular and viral promoters including fibrinogen, alpha-globin, SV40 and HIV-1 promoters. Activation of the alpha-globin promoter in erythroid cells is via synergistic interaction with UBP1. Functions as part of the SSP (stage selector protein) complex. Facilitates the interaction of the gamma-globin genes with enhancer elements contained in the locus control region in fetal erythroid cells. Interacts by binding to the stage selector element (SSE) in the proximal gamma-globin promoter. The protein is Alpha-globin transcription factor CP2 (TFCP2) of Homo sapiens (Human).